A 495-amino-acid chain; its full sequence is Aspartyl/glutamyl-tRNA(Asn/Gln) amidotransferase subunit B (495 aa).

This sequence belongs to the GatB/GatE family. GatB subfamily. Heterotrimer of A, B and C subunits.

It catalyses the reaction L-glutamyl-tRNA(Gln) + L-glutamine + ATP + H2O = L-glutaminyl-tRNA(Gln) + L-glutamate + ADP + phosphate + H(+). The catalysed reaction is L-aspartyl-tRNA(Asn) + L-glutamine + ATP + H2O = L-asparaginyl-tRNA(Asn) + L-glutamate + ADP + phosphate + 2 H(+). In terms of biological role, allows the formation of correctly charged Asn-tRNA(Asn) or Gln-tRNA(Gln) through the transamidation of misacylated Asp-tRNA(Asn) or Glu-tRNA(Gln) in organisms which lack either or both of asparaginyl-tRNA or glutaminyl-tRNA synthetases. The reaction takes place in the presence of glutamine and ATP through an activated phospho-Asp-tRNA(Asn) or phospho-Glu-tRNA(Gln). The sequence is that of Aspartyl/glutamyl-tRNA(Asn/Gln) amidotransferase subunit B from Methanosarcina mazei (strain ATCC BAA-159 / DSM 3647 / Goe1 / Go1 / JCM 11833 / OCM 88) (Methanosarcina frisia).